A 1723-amino-acid polypeptide reads, in one-letter code: Probable outer membrane protein pmp20 (1723 aa).

Positions 1-21 are cleaved as a signal peptide; sequence MKWLPATAVFAAVLPALTAFG. Disordered stretches follow at residues 78-100 and 139-161; these read VTPD…SGAT and LSSS…SASA. Low complexity-rich tracts occupy residues 85 to 100 and 140 to 161; these read SSSN…SGAT and SSSS…SASA. In terms of domain architecture, Autotransporter spans 1434 to 1723; the sequence is EDPAFNNFWA…MANGGIRFVF (290 aa).

Belongs to the PMP outer membrane protein family.

The protein resides in the secreted. It localises to the cell wall. It is found in the cell outer membrane. The protein is Probable outer membrane protein pmp20 (pmp20) of Chlamydia pneumoniae (Chlamydophila pneumoniae).